Here is a 218-residue protein sequence, read N- to C-terminus: uncharacterized protein (218 aa).

The signal sequence occupies residues 1 to 21; the sequence is MKKFVYKYSFGALLLLSGLSS. Cysteine 22 carries N-palmitoyl cysteine lipidation. Cysteine 22 carries S-diacylglycerol cysteine lipidation.

It belongs to the chlamydial CPn_0875/CT_734/TC_0107 family.

The protein resides in the cell membrane. This is an uncharacterized protein from Chlamydia muridarum (strain MoPn / Nigg).